The following is a 244-amino-acid chain: Tubulin-folding cofactor B (244 aa).

Met1 carries the N-acetylmethionine modification. Tyr98 bears the Phosphotyrosine mark. The residue at position 110 (Ser110) is a Phosphoserine. In terms of domain architecture, CAP-Gly spans 183 to 225 (GLTDFKPGYWIGIRYDEPLGKNDGSVNGKRYFECQAKYGAFVK). At Lys219 the chain carries N6-acetyllysine.

Belongs to the TBCB family. In terms of assembly, supercomplex made of cofactors A to E. Cofactors A and D function by capturing and stabilizing tubulin in a quasi-native conformation. Cofactor E binds to the cofactor D-tubulin complex; interaction with cofactor C then causes the release of tubulin polypeptides that are committed to the native state. Cofactors B and E can form a heterodimer which binds to alpha-tubulin and enhances their ability to dissociate tubulin heterodimers. Interacts with GAN. Interacts with DCTN1. Post-translationally, ubiquitinated in the presence of GAN which targets it for degradation by the proteasome. In terms of processing, phosphorylation by PAK1 is required for normal function.

It localises to the cytoplasm. It is found in the cytoskeleton. Binds to alpha-tubulin folding intermediates after their interaction with cytosolic chaperonin in the pathway leading from newly synthesized tubulin to properly folded heterodimer. Involved in regulation of tubulin heterodimer dissociation. May function as a negative regulator of axonal growth. This Bos taurus (Bovine) protein is Tubulin-folding cofactor B (TBCB).